Here is a 296-residue protein sequence, read N- to C-terminus: Uracil phosphoribosyltransferase, chloroplastic (296 aa).

A chloroplast-targeting transit peptide spans 1–61 (MACSIGNAFR…SSSLSRRTIR (61 aa)). The residue at position 2 (alanine 2) is an N-acetylalanine. GTP is bound at residue 148–151 (REPI). 5-phospho-alpha-D-ribose 1-diphosphate-binding positions include arginine 158, arginine 183, aspartate 211, 216-219 (TGGT), and aspartate 282. 281–283 (GDA) contacts uracil.

It belongs to the UPRTase family. Mg(2+) is required as a cofactor.

It localises to the plastid. The protein resides in the chloroplast. It catalyses the reaction UMP + diphosphate = 5-phospho-alpha-D-ribose 1-diphosphate + uracil. The protein operates within pyrimidine metabolism; UMP biosynthesis via salvage pathway; UMP from uracil: step 1/1. Allosterically activated by GTP. Its function is as follows. Uracil phosphoribosyltransferase (UPRT) that catalyzes the conversion of uracil and 5-phospho-alpha-D-ribose 1-diphosphate (PRPP) to UMP and diphosphate. Is probably the only functional UPRT, since the dual-domain proteins of the UKL family seem to lack this activity. This chain is Uracil phosphoribosyltransferase, chloroplastic (UPP), found in Arabidopsis thaliana (Mouse-ear cress).